A 116-amino-acid chain; its full sequence is Iron-sulfur cluster insertion protein ErpA (116 aa).

Iron-sulfur cluster contacts are provided by C44, C108, and C110.

The protein belongs to the HesB/IscA family. Homodimer. It depends on iron-sulfur cluster as a cofactor.

In terms of biological role, required for insertion of 4Fe-4S clusters for at least IspG. The sequence is that of Iron-sulfur cluster insertion protein ErpA from Shewanella piezotolerans (strain WP3 / JCM 13877).